A 594-amino-acid chain; its full sequence is Pentatricopeptide repeat-containing protein At1g15480, mitochondrial (594 aa).

A mitochondrion-targeting transit peptide spans 1–67; sequence MFALSKVLRR…WSSSTGRRSL (67 aa). Low complexity predominate over residues 62–75; sequence TGRRSLSSDAGAKT. The interval 62-109 is disordered; it reads TGRRSLSSDAGAKTTGDDDDLEDKNVDLATPDETSSDSEDGEEFSGDE. Residues 95–109 show a composition bias toward acidic residues; that stretch reads TSSDSEDGEEFSGDE. 7 PPR repeats span residues 226 to 260, 261 to 294, 295 to 329, 330 to 364, 432 to 466, 467 to 502, and 503 to 537; these read GELVYRTLLANHVATSNVRTAEAVFNKMKDLGFPL, STFTCNQMLILYKRVDKKKIADVLLLLEKENLKP, NLNTYKILIDTKGSSNDITGMEQIVETMKSEGVEL, DLRARALIARHYASAGLKEKAEKVLKEMEGESLEE, SSNVYSVLLRVYVDHKMVSEGKDLVKQMSDSGCNI, GALTWDAVIKLYVEAGEVEKAESSLSKAIQSKQIKP, and LMSSFMYLMHEYVRRGDVHNTEKIFQRMKQAGYQS.

The protein belongs to the PPR family. P subfamily.

The protein localises to the mitochondrion. This is Pentatricopeptide repeat-containing protein At1g15480, mitochondrial from Arabidopsis thaliana (Mouse-ear cress).